Here is a 263-residue protein sequence, read N- to C-terminus: Putative TATA-binding protein pB263R (263 aa).

This sequence belongs to the asfivirus B263R family.

Putative TATA-binding protein. This chain is Putative TATA-binding protein pB263R, found in African swine fever virus (isolate Warthog/Namibia/Wart80/1980) (ASFV).